A 247-amino-acid polypeptide reads, in one-letter code: MVKFVFPDAREWKYIIESLATIVDEANFVASPEGLKLRALDPGRIAMVDLFIPSNLFEEYSVDQETKISAVLDDIDKVLKRAKSDDKISFEVSQGRLIITLSGRAERRFKFPLIDIAGQELPSPKLNFTVAAKMLSDTFRDALKDASLVSESVKLKAEDESLWLLARSDKGEIESRFSIETGSLVEIDVKEAAEASYGIDFLDKIVSKAYRISDILGLRFATNMPLEMTFDIAGGGTLKYLLAPRME.

The protein belongs to the PCNA family. In terms of assembly, homotrimer. The subunits circularize to form a toroid; DNA passes through its center. Replication factor C (RFC) is required to load the toroid on the DNA.

Functionally, sliding clamp subunit that acts as a moving platform for DNA processing. Responsible for tethering the catalytic subunit of DNA polymerase and other proteins to DNA during high-speed replication. This is DNA polymerase sliding clamp from Thermofilum pendens (strain DSM 2475 / Hrk 5).